Consider the following 153-residue polypeptide: MKITITSLLFFLVMIVELASAGTLLHNGANLPSLRDNTTLTDARNVLKYLQVLGFPSNKIAATDTVGTFIIFSNRTEANTTAMTKTVSYCYRNYGHSFYFTHYKYDYFPSGISYMAKLGDATVNHTDLPHFRNNKRLTTQELNAFQHPIVEFQ.

Residues 1 to 21 (MKITITSLLFFLVMIVELASA) form the signal peptide.

This is an uncharacterized protein from Saccharomyces cerevisiae (strain ATCC 204508 / S288c) (Baker's yeast).